A 141-amino-acid polypeptide reads, in one-letter code: uncharacterized protein (141 aa).

This is an uncharacterized protein from Saccharomyces cerevisiae (strain ATCC 204508 / S288c) (Baker's yeast).